Consider the following 914-residue polypeptide: High affinity cAMP-specific and IBMX-insensitive 3',5'-cyclic phosphodiesterase 8 (914 aa).

Disordered stretches follow at residues 1–27 and 113–138; these read MGCS…PLDA and RRAT…HRKS. The span at 116-129 shows a compositional bias: low complexity; sequence TGSTGTSGTSSSGG. A PAS domain is found at 312–359; that stretch reads TQQALYTALHRLKEVVLITDDLLRIQYANRATERLLNMRLDEIISKQL. Positions 558 to 893 constitute a PDEase domain; the sequence is TAAIVPAKMK…SQWKKYDEQG (336 aa). Catalysis depends on His-640, which acts as the Proton donor. A divalent metal cation-binding residues include His-644, His-682, Asp-683, and Asp-799.

Belongs to the cyclic nucleotide phosphodiesterase family. PDE8 subfamily. It depends on a divalent metal cation as a cofactor. In terms of tissue distribution, expressed in Malpighian tubules and head.

It carries out the reaction 3',5'-cyclic AMP + H2O = AMP + H(+). It participates in purine metabolism; 3',5'-cyclic AMP degradation; AMP from 3',5'-cyclic AMP: step 1/1. Hydrolyzes the second messenger cAMP, which is a key regulator of many important physiological processes. Involved in the positive regulation of MAP kinase signaling and in inhibiting oxidative stress-induced cell death. The chain is High affinity cAMP-specific and IBMX-insensitive 3',5'-cyclic phosphodiesterase 8 from Drosophila melanogaster (Fruit fly).